Here is a 274-residue protein sequence, read N- to C-terminus: Penicillin-insensitive murein endopeptidase (274 aa).

A signal peptide spans 1–19 (MNKTAIALLALLASSVSLA). 3 cysteine pairs are disulfide-bonded: cysteine 44-cysteine 265, cysteine 187-cysteine 235, and cysteine 216-cysteine 223. Residues histidine 110, histidine 113, aspartate 120, aspartate 147, histidine 150, and histidine 211 each coordinate Zn(2+). Positions 227-274 (PLPPPGDGCGAELQSWFEPPKPGTTKPEKKTPPPLPPSCQALLDEHVI) are disordered.

It belongs to the peptidase M74 family. Dimer. Zn(2+) serves as cofactor.

Its subcellular location is the periplasm. Murein endopeptidase that cleaves the D-alanyl-meso-2,6-diamino-pimelyl amide bond that connects peptidoglycan strands. Likely plays a role in the removal of murein from the sacculus. The sequence is that of Penicillin-insensitive murein endopeptidase from Escherichia coli O157:H7.